Here is a 415-residue protein sequence, read N- to C-terminus: 3-isopropylmalate dehydratase large subunit (415 aa).

Positions 295, 353, and 356 each coordinate [4Fe-4S] cluster.

It belongs to the aconitase/IPM isomerase family. LeuC type 2 subfamily. In terms of assembly, heterodimer of LeuC and LeuD. [4Fe-4S] cluster is required as a cofactor.

The catalysed reaction is (2R,3S)-3-isopropylmalate = (2S)-2-isopropylmalate. It functions in the pathway amino-acid biosynthesis; L-leucine biosynthesis; L-leucine from 3-methyl-2-oxobutanoate: step 2/4. Its function is as follows. Catalyzes the isomerization between 2-isopropylmalate and 3-isopropylmalate, via the formation of 2-isopropylmaleate. The protein is 3-isopropylmalate dehydratase large subunit of Pyrobaculum neutrophilum (strain DSM 2338 / JCM 9278 / NBRC 100436 / V24Sta) (Thermoproteus neutrophilus).